A 266-amino-acid polypeptide reads, in one-letter code: tRNA pseudouridine synthase A (266 aa).

D51 serves as the catalytic Nucleophile. A substrate-binding site is contributed by Y106.

Belongs to the tRNA pseudouridine synthase TruA family.

It carries out the reaction uridine(38/39/40) in tRNA = pseudouridine(38/39/40) in tRNA. In terms of biological role, formation of pseudouridine at positions 38, 39 and 40 in the anticodon stem and loop of transfer RNAs. This is tRNA pseudouridine synthase A from Pyrococcus furiosus (strain ATCC 43587 / DSM 3638 / JCM 8422 / Vc1).